The sequence spans 408 residues: DNA primase DnaG (408 aa).

Positions 166–241 (EEIIIVEGRA…KIDYIARAPP (76 aa)) constitute a Toprim domain. The Mg(2+) site is built by E172, D215, and D217.

The protein belongs to the archaeal DnaG primase family. As to quaternary structure, forms a ternary complex with MCM helicase and DNA. Component of the archaeal exosome complex. The cofactor is Mg(2+).

The catalysed reaction is ssDNA + n NTP = ssDNA/pppN(pN)n-1 hybrid + (n-1) diphosphate.. Its function is as follows. RNA polymerase that catalyzes the synthesis of short RNA molecules used as primers for DNA polymerase during DNA replication. Also part of the exosome, which is a complex involved in RNA degradation. Acts as a poly(A)-binding protein that enhances the interaction between heteromeric, adenine-rich transcripts and the exosome. In Desulfurococcus amylolyticus (strain DSM 18924 / JCM 16383 / VKM B-2413 / 1221n) (Desulfurococcus kamchatkensis), this protein is DNA primase DnaG.